The primary structure comprises 790 residues: Exocyst complex component SEC15A (790 aa).

Positions 49–70 form a coiled coil; sequence LVHQLKNVARKKEAEIEDLCKT.

It belongs to the SEC15 family. The exocyst complex is composed of SEC3, SEC5, SEC6, SEC8, SEC10, EXO70A1 and EXO84B.

It is found in the cytoplasm. The protein localises to the cytosol. In terms of biological role, component of the exocyst complex involved in the docking of exocytic vesicles with fusion sites on the plasma membrane during regulated or polarized secretion. Involved in polarized cell growth and organ morphogenesis. During cytokinesis, involved in cell plate initiation, cell plate maturation and formation of new primary cell wall. This chain is Exocyst complex component SEC15A (SEC15A), found in Arabidopsis thaliana (Mouse-ear cress).